Here is a 578-residue protein sequence, read N- to C-terminus: Nucleolar protein 58 (578 aa).

Residues 285-410 enclose the Nop domain; sequence IAPNLTALVG…LERKLAGMEG (126 aa). Positions 443-578 are disordered; that stretch reads DADAVDEPSS…KQKKKKKKDE (136 aa). Residues 462-485 show a composition bias toward acidic residues; that stretch reads EVQDTEMADADSDAEADSSDESEE. 2 stretches are compositionally biased toward basic and acidic residues: residues 495–505 and 547–561; these read SKDADLEKMAE and KKADKGEEKKRKRSD. The segment covering 569-578 has biased composition (basic residues); sequence KQKKKKKKDE.

It belongs to the NOP5/NOP56 family.

The protein localises to the nucleus. It localises to the nucleolus. Functionally, required for pre-18S rRNA processing. May bind microtubules. This chain is Nucleolar protein 58 (nop58), found in Aspergillus oryzae (strain ATCC 42149 / RIB 40) (Yellow koji mold).